Consider the following 272-residue polypeptide: Cerberus (272 aa).

An N-terminal signal peptide occupies residues 1–17 (MHLLLVQLLVLLPLGKA). Cystine bridges form between cysteine 162-cysteine 209, cysteine 176-cysteine 223, cysteine 186-cysteine 239, and cysteine 190-cysteine 241. In terms of domain architecture, CTCK spans 162-246 (CRTVPFNQTI…EECQCMVKTE (85 aa)). N-linked (GlcNAc...) asparagine glycosylation is found at asparagine 168 and asparagine 222.

This sequence belongs to the DAN family. In terms of assembly, forms monomers and predominantly dimers. N-glycosylated.

It is found in the secreted. Cytokine that may play a role in anterior neural induction and somite formation during embryogenesis in part, through a BMP-inhibitory mechanism. Can regulate Nodal signaling during gastrulation as well as the formation and patterning of the primitive streak. This is Cerberus (Cer1) from Mus musculus (Mouse).